The chain runs to 957 residues: Thioredoxin domain-containing protein 11 (957 aa).

Residues 1-13 (MSECGGRGGGGGS) are compositionally biased toward gly residues. The tract at residues 1–47 (MSECGGRGGGGGSSSSSDDAEDEGGGGGPAGSGSLSPAPAASSEGRL) is disordered. Residues 32-44 (SGSLSPAPAASSE) are compositionally biased toward low complexity. A helical transmembrane segment spans residues 64–84 (LLCGAVALGCALLLALKFTCS). Positions 91 to 213 (IPAKPPVSFF…IEKFVRRVMK (123 aa)) constitute a Thioredoxin 1 domain. Intrachain disulfides connect Cys441–Cys444 and Cys691–Cys694. Residues 621–771 (LDPKQALMKF…LLRFILHHSD (151 aa)) form the Thioredoxin 2 domain. Residues 785 to 889 (AECLQNEAVL…ADASETLLTE (105 aa)) adopt a coiled-coil conformation. Residues 904-925 (LEGRDGADDRVPPSKARSEHPE) are compositionally biased toward basic and acidic residues. Positions 904 to 957 (LEGRDGADDRVPPSKARSEHPEPPGAPRLPASTPLPANISSTLASEGSPENRTD) are disordered. Residues 941-951 (NISSTLASEGS) show a composition bias toward polar residues.

The protein belongs to the protein disulfide isomerase family. In terms of assembly, interacts with the cytoplasmic part of DUOX1 and DUOX2. Interacts with TPO and CYBA.

Its subcellular location is the endoplasmic reticulum membrane. Functionally, may act as a redox regulator involved in DUOX proteins folding. The interaction with DUOX1 and DUOX2 suggest that it belongs to a multiprotein complex constituting the thyroid H(2)O(2) generating system. It is however not sufficient to assist DUOX1 and DUOX2 in H(2)O(2) generation. The chain is Thioredoxin domain-containing protein 11 (TXNDC11) from Bos taurus (Bovine).